The following is a 94-amino-acid chain: Small ribosomal subunit protein bS20 (94 aa).

This sequence belongs to the bacterial ribosomal protein bS20 family.

In terms of biological role, binds directly to 16S ribosomal RNA. The protein is Small ribosomal subunit protein bS20 of Acaryochloris marina (strain MBIC 11017).